Here is a 181-residue protein sequence, read N- to C-terminus: HGPRTase-like protein 2 (181 aa).

This sequence belongs to the purine/pyrimidine phosphoribosyltransferase family. Archaeal HPRT subfamily.

In terms of biological role, may catalyze a purine salvage reaction, the substrate is unknown. The sequence is that of HGPRTase-like protein 2 from Natrialba magadii (strain ATCC 43099 / DSM 3394 / CCM 3739 / CIP 104546 / IAM 13178 / JCM 8861 / NBRC 102185 / NCIMB 2190 / MS3) (Natronobacterium magadii).